The primary structure comprises 462 residues: Beta-glucosidase 1A (462 aa).

Residues Gln20, His123, and Asn169 each contribute to the substrate site. The active-site Proton donor is Glu170. Tyr301 is a substrate binding site. Glu365 serves as the catalytic Nucleophile. Substrate-binding positions include Trp415 and 422–423; that span reads EW.

This sequence belongs to the glycosyl hydrolase 1 family.

It carries out the reaction Hydrolysis of terminal, non-reducing beta-D-glucosyl residues with release of beta-D-glucose.. Its function is as follows. Plays an important role in cellulose degradation. Shows hydrolytic activity against several glycosidic compounds. This chain is Beta-glucosidase 1A, found in Phanerodontia chrysosporium (White-rot fungus).